Reading from the N-terminus, the 396-residue chain is Elongation factor Tu (396 aa).

The 197-residue stretch at 10-206 (KPHVNVGTIG…ALDTYIPTPE (197 aa)) folds into the tr-type G domain. Residues 19–26 (GHVDHGKT) are G1. 19–26 (GHVDHGKT) provides a ligand contact to GTP. Thr-26 is a Mg(2+) binding site. The interval 60–64 (GITIN) is G2. The G3 stretch occupies residues 81–84 (DCPG). GTP contacts are provided by residues 81-85 (DCPGH) and 136-139 (NKAD). The interval 136–139 (NKAD) is G4. The tract at residues 174 to 176 (SAK) is G5.

It belongs to the TRAFAC class translation factor GTPase superfamily. Classic translation factor GTPase family. EF-Tu/EF-1A subfamily. In terms of assembly, monomer.

The protein resides in the cytoplasm. It carries out the reaction GTP + H2O = GDP + phosphate + H(+). Functionally, GTP hydrolase that promotes the GTP-dependent binding of aminoacyl-tRNA to the A-site of ribosomes during protein biosynthesis. The chain is Elongation factor Tu from Bordetella avium (strain 197N).